Consider the following 290-residue polypeptide: Translin-associated protein X (290 aa).

A disordered region spans residues 1–31 (MNGKEGPGGFRKRKHDTFPHNQRREGKDASL). Residues 16 to 28 (DTFPHNQRREGKD) are compositionally biased toward basic and acidic residues. An interaction with C1D region spans residues 73-208 (LLHRITSAPD…MRMCINSVGN (136 aa)). Mg(2+) is bound by residues E129 and E197. Residue K279 forms a Glycyl lysine isopeptide (Lys-Gly) (interchain with G-Cter in SUMO2) linkage.

This sequence belongs to the translin family. Ring-shaped heterooctamer of six TSN and two TSNAX subunits. Interacts with GOLGA3, TSNAXIP1, SUN1 and AKAP9. Interacts with the homodimeric form of C1D following gamma-radiation. Interacts with TSN and C1D in a mutually exclusive manner. In terms of processing, sumoylated with SUMO1. In terms of tissue distribution, detected in heart, brain, lung, liver, kidney and testis.

It localises to the cytoplasm. Its subcellular location is the perinuclear region. The protein resides in the golgi apparatus. It is found in the nucleus. Functionally, acts in combination with TSN as an endonuclease involved in the activation of the RNA-induced silencing complex (RISC). Possible role in spermatogenesis. This is Translin-associated protein X (Tsnax) from Mus musculus (Mouse).